The sequence spans 424 residues: Histidine--tRNA ligase (424 aa).

It belongs to the class-II aminoacyl-tRNA synthetase family. Homodimer.

Its subcellular location is the cytoplasm. The catalysed reaction is tRNA(His) + L-histidine + ATP = L-histidyl-tRNA(His) + AMP + diphosphate + H(+). This is Histidine--tRNA ligase from Escherichia coli (strain 55989 / EAEC).